The chain runs to 156 residues: Small ribosomal subunit protein uS7 (156 aa).

The protein belongs to the universal ribosomal protein uS7 family. In terms of assembly, part of the 30S ribosomal subunit. Contacts proteins S9 and S11.

In terms of biological role, one of the primary rRNA binding proteins, it binds directly to 16S rRNA where it nucleates assembly of the head domain of the 30S subunit. Is located at the subunit interface close to the decoding center, probably blocks exit of the E-site tRNA. This chain is Small ribosomal subunit protein uS7, found in Solibacter usitatus (strain Ellin6076).